The chain runs to 67 residues: Large ribosomal subunit protein uL29 (67 aa).

This sequence belongs to the universal ribosomal protein uL29 family.

The polypeptide is Large ribosomal subunit protein uL29 (Heliobacterium modesticaldum (strain ATCC 51547 / Ice1)).